Reading from the N-terminus, the 1043-residue chain is RNA cytidine acetyltransferase (1043 aa).

ATP contacts are provided by residues 285–294 and Arg-462; that span reads GRGKSAAVGL. Residues 551–736 form the N-acetyltransferase domain; that stretch reads VLMAPIDKSR…VPVYIRQNSN (186 aa). Acetyl-CoA is bound by residues 622–624, 629–635, and Arg-723; these read VAV and QSMGYGG. Residues 1020–1043 are disordered; it reads IPDAKDPANKNAKKKKRFSSGGRR. Residues 1030-1043 show a composition bias toward basic residues; the sequence is NAKKKKRFSSGGRR.

The protein belongs to the RNA cytidine acetyltransferase family. NAT10 subfamily. As to quaternary structure, part of the small subunit (SSU) processome, composed of more than 70 proteins and the RNA chaperone small nucleolar RNA (snoRNA) U3.

The protein localises to the nucleus. The protein resides in the nucleolus. The enzyme catalyses a cytidine in 18S rRNA + acetyl-CoA + ATP + H2O = an N(4)-acetylcytidine in 18S rRNA + ADP + phosphate + CoA + H(+). It catalyses the reaction a cytidine in tRNA + acetyl-CoA + ATP + H2O = an N(4)-acetylcytidine in tRNA + ADP + phosphate + CoA + H(+). In terms of biological role, RNA cytidine acetyltransferase with specificity toward both 18S rRNA and tRNAs. Catalyzes the formation of N(4)-acetylcytidine (ac4C) in 18S rRNA. Required for early nucleolar cleavages of precursor rRNA at sites A0, A1 and A2 during 18S rRNA synthesis. Catalyzes the formation of ac4C in serine and leucine tRNAs. Requires a tRNA-binding adapter protein for full tRNA acetyltransferase activity but not for 18S rRNA acetylation. Part of the small subunit (SSU) processome, first precursor of the small eukaryotic ribosomal subunit. During the assembly of the SSU processome in the nucleolus, many ribosome biogenesis factors, an RNA chaperone and ribosomal proteins associate with the nascent pre-rRNA and work in concert to generate RNA folding, modifications, rearrangements and cleavage as well as targeted degradation of pre-ribosomal RNA by the RNA exosome. This chain is RNA cytidine acetyltransferase, found in Caenorhabditis elegans.